We begin with the raw amino-acid sequence, 279 residues long: Zinc finger AN1 and C2H2 domain-containing stress-associated protein 11 (279 aa).

2 AN1-type zinc fingers span residues 7-55 and 95-145; these read PDLG…REDV and ATKK…KLPF. Residues C13, C18, C28, C31, C36, H39, H45, C47, C101, C106, C118, C121, C126, H129, H135, and C137 each coordinate Zn(2+). Residues 152–178 are disordered; sequence STTRKEAKTTRPNKAHPSTSSSSSSSR. Low complexity predominate over residues 169–178; sequence STSSSSSSSR. C2H2-type zinc fingers lie at residues 213–236 and 250–273; these read EVCP…EKTH and DVCP…ERDH.

Functionally, may be involved in environmental stress response. The sequence is that of Zinc finger AN1 and C2H2 domain-containing stress-associated protein 11 (SAP11) from Arabidopsis thaliana (Mouse-ear cress).